Consider the following 85-residue polypeptide: MLRGYRAVFSPFYGDVCRYYPSCSAYTLQAVQEHGVIFGGYLGVCRILRCHPWAAGGVDDVPLRGKRRYRMTAFGFVVATSQGKA.

It belongs to the UPF0161 family.

The protein localises to the cell membrane. Could be involved in insertion of integral membrane proteins into the membrane. The protein is Putative membrane protein insertion efficiency factor of Leifsonia xyli subsp. xyli (strain CTCB07).